Reading from the N-terminus, the 244-residue chain is Flavin-dependent thymidylate synthase (244 aa).

Residues 2–207 (VRVTLVNYTR…ELRPIIKWAK (206 aa)) enclose the ThyX domain. FAD is bound by residues Ser56, 80-82 (RHR), and Gln88. DUMP-binding positions include 77–80 (QLVR), 88–92 (QQSQR), and Arg146. Positions 80–90 (RHRIASYTQQS) match the ThyX motif motif. Residues 162–164 (NLR) and His168 each bind FAD. Arg173 serves as a coordination point for dUMP. The Involved in ionization of N3 of dUMP, leading to its activation role is filled by Arg173.

It belongs to the thymidylate synthase ThyX family. Homotetramer. Requires FAD as cofactor.

The catalysed reaction is dUMP + (6R)-5,10-methylene-5,6,7,8-tetrahydrofolate + NADPH + H(+) = dTMP + (6S)-5,6,7,8-tetrahydrofolate + NADP(+). The protein operates within pyrimidine metabolism; dTTP biosynthesis. Its function is as follows. Catalyzes the reductive methylation of 2'-deoxyuridine-5'-monophosphate (dUMP) to 2'-deoxythymidine-5'-monophosphate (dTMP) while utilizing 5,10-methylenetetrahydrofolate (mTHF) as the methyl donor, and NADPH and FADH(2) as the reductant. The sequence is that of Flavin-dependent thymidylate synthase from Pyrococcus abyssi (strain GE5 / Orsay).